A 238-amino-acid chain; its full sequence is Uridylate kinase (238 aa).

An ATP-binding site is contributed by Lys-12–Gly-15. Gly-54 provides a ligand contact to UMP. ATP-binding residues include Gly-55 and Arg-59. UMP-binding positions include Asp-74 and Thr-135 to Thr-142. ATP contacts are provided by Thr-162, Asn-163, Tyr-168, and Asp-171.

The protein belongs to the UMP kinase family. Homohexamer.

It localises to the cytoplasm. It carries out the reaction UMP + ATP = UDP + ADP. It functions in the pathway pyrimidine metabolism; CTP biosynthesis via de novo pathway; UDP from UMP (UMPK route): step 1/1. Inhibited by UTP. Catalyzes the reversible phosphorylation of UMP to UDP. The chain is Uridylate kinase from Bradyrhizobium sp. (strain BTAi1 / ATCC BAA-1182).